Here is a 286-residue protein sequence, read N- to C-terminus: Acyl-CoA thioesterase 2 (286 aa).

Active-site charge relay system residues include aspartate 204, threonine 228, and glutamine 278.

Belongs to the C/M/P thioester hydrolase family. In terms of assembly, homotetramer.

It catalyses the reaction a fatty acyl-CoA + H2O = a fatty acid + CoA + H(+). Its function is as follows. Thioesterase that has relatively broad substrate specificity, hydrolyzing primarily medium- and long-chain acyl-CoA substrates to free fatty acids and CoA. The sequence is that of Acyl-CoA thioesterase 2 (tesB) from Haemophilus influenzae (strain ATCC 51907 / DSM 11121 / KW20 / Rd).